The sequence spans 183 residues: Ubiquitin-conjugating enzyme E2 H (183 aa).

In terms of domain architecture, UBC core spans 1–150 (MSSPSPGKRR…IKEYIQKYAT (150 aa)). An N6-acetyllysine modification is found at K60. C87 functions as the Glycyl thioester intermediate in the catalytic mechanism. The interval 152 to 183 (EALKEQEEGTGDSSSESSMSDFSEDEAQDMEL) is disordered. Residues 163–172 (DSSSESSMSD) are compositionally biased toward low complexity. Positions 173–183 (FSEDEAQDMEL) are enriched in acidic residues.

This sequence belongs to the ubiquitin-conjugating enzyme family. As to quaternary structure, interacts with MAEA and WDR26, components of the CTLH complex that contains GID4, RANBP9 and/or RANBP10, MKLN1, MAEA, RMND5A (or alternatively its paralog RMND5B), GID8, ARMC8, WDR26 and YPEL5. In terms of processing, autoubiquitinated in vitro in the presence of NEDD4L.

It carries out the reaction S-ubiquitinyl-[E1 ubiquitin-activating enzyme]-L-cysteine + [E2 ubiquitin-conjugating enzyme]-L-cysteine = [E1 ubiquitin-activating enzyme]-L-cysteine + S-ubiquitinyl-[E2 ubiquitin-conjugating enzyme]-L-cysteine.. It catalyses the reaction S-ubiquitinyl-[E1 ubiquitin-activating enzyme]-L-cysteine + [acceptor protein]-L-lysine = [E1 ubiquitin-activating enzyme]-L-cysteine + N(6)-monoubiquitinyl-[acceptor protein]-L-lysine.. The protein operates within protein modification; protein ubiquitination. In terms of biological role, accepts ubiquitin from the E1 complex and catalyzes its covalent attachment to other proteins. E2 ubiquitin conjugating enzyme that transfers ubiquitin to MAEA, a core component of the CTLH E3 ubiquitin-protein ligase complex. In vitro catalyzes 'Lys-11'- and 'Lys-48'-linked polyubiquitination. Capable, in vitro, to ubiquitinate histone H2A. This is Ubiquitin-conjugating enzyme E2 H (UBE2H) from Homo sapiens (Human).